A 288-amino-acid chain; its full sequence is Protein sprouty homolog 3 (288 aa).

Residues 154 to 267 (KCVPCTAVRP…PGCRCKRHTN (114 aa)) form the SPR domain.

It belongs to the sprouty family. Interacts with TESK1. Interacts with USP11. Interacts with CAV1 (via C-terminus). In terms of tissue distribution, expressed in the brain with expression the highest in Purkinje cell bodies and projections in the cerebellum (at protein level). Also expressed in central and peripheral nervous system ganglion cells, superior cervical ganglion and dorsal root ganglion (at protein level). Expressed in the retinal ganglion cell layer and the inner nuclear layer (at protein level).

The protein localises to the cytoplasm. Its function is as follows. Inhibits neurite branching, arbor length and neurite complexity. Inhibits EGF-mediated p42/44 ERK signaling. Negatively regulates the MAPK cascade, resulting in a reduction of extracellular matrix protein accumulation. May function as an antagonist of fibroblast growth factor (FGF) pathways and may negatively modulate respiratory organogenesis. The polypeptide is Protein sprouty homolog 3 (Mus musculus (Mouse)).